The following is a 693-amino-acid chain: Sulfite reductase 1 [ferredoxin], chloroplastic (693 aa).

The transit peptide at 1-62 directs the protein to the chloroplast; it reads MTTSFGAAIN…PSSIVRAVST (62 aa). C502, C508, C548, and C552 together coordinate [4Fe-4S] cluster. C552 contributes to the siroheme binding site.

This sequence belongs to the nitrite and sulfite reductase 4Fe-4S domain family. Monomer. Interacts with ferredoxin. The cofactor is siroheme. [4Fe-4S] cluster is required as a cofactor. In terms of processing, phosphorylated; this phosphorylation reduces DNA-binding. In terms of tissue distribution, expressed in leaves, stems, roots and petals.

It localises to the plastid. It is found in the chloroplast stroma. The protein localises to the chloroplast nucleoid. The protein resides in the plastid stroma. It catalyses the reaction hydrogen sulfide + 6 oxidized [2Fe-2S]-[ferredoxin] + 3 H2O = sulfite + 6 reduced [2Fe-2S]-[ferredoxin] + 7 H(+). Functionally, essential protein with sulfite reductase activity required in assimilatory sulfate reduction pathway during both primary and secondary metabolism and thus involved in development and growth. DNA-binding protein that binds to both double-stranded and single-stranded DNA without significant sequence specificity to reversibly repress the transcriptional activity of chloroplast nucleoids by promoting DNA compaction and possibly regulate DNA replication. This chain is Sulfite reductase 1 [ferredoxin], chloroplastic (SIR1), found in Nicotiana tabacum (Common tobacco).